The sequence spans 375 residues: ORC1-type DNA replication protein 3 (375 aa).

Residues 66–70 (TGKTT), Tyr209, and Arg221 contribute to the ATP site.

It belongs to the CDC6/cdc18 family.

Its function is as follows. Involved in regulation of DNA replication. The chain is ORC1-type DNA replication protein 3 (cdc6c) from Haloarcula marismortui (strain ATCC 43049 / DSM 3752 / JCM 8966 / VKM B-1809) (Halobacterium marismortui).